An 893-amino-acid polypeptide reads, in one-letter code: MKNKKALFIPLFIIILFIAFFNKIINFIINIKWFKEVNYLAVYFTKMRAIIILMIPIFIIFFISIWMYYKSLIINKNKSVVDIGLNKNNYGKKLFFIFNFIVSIFLAYIFSSSYWYRILQFNNSVDFNVKDPIFFKDVSFYIFKLPLFESLYKVIISLLLFLVITTFIAYFILEAKYKIQSRKDINLKNINYGIKSFAGKQLAIVSGLIILFISFGHLIKIWNLVYSSNGVSFGASYTDVHATLLFYKIIVVITLISSIVTLLSIVKGKFKPVSICIGITIFLIVSQNIASFLVQNFIVKSNEKTLEQPYIKNNIDLTRKAFALDDIEIRDFDIKNDLQKQDIADNKASIDNIRINSFKPTLEFYNQVQIIRYYYTFNDIDIDRYNINGKYNQVFLAAREIDTDALNPNTWQNRHLIYTHGFGAVMNKVNSVTSEGQPDFVIKDIPPYNKTNIKLTNPRIYFGEKTNDYVIVNTKINEFDYPREDSNKTNKYNGHAGIKMSFINRLLFAINKKDINFLLSKDIKKDSKIIINRNIVERAKKIAPFLTYDSDPYMVIYNGKIYWIIDAYTTTNRYPYSEPYDSINYIRNSAKVVIDSVDGDTNFYITDKKDPIVNNYAKTFKGLFKEEEDAPKEIREHFRYPKDLFSIQSKVLGKYHVKDPGVFYNGEDLWEVSKDQKHVEGETNTNDAPYIIMKLPDQNKEEMVLLNYFNVMKKDNMIALFGARMDGEQYGKKILYKLPSDKTVYSPYLFKQKINQDTNISKELSLWNREGSKVQYGDTIILPIKNSLLYIEPLYLRASGKNSIPEMKRVILSYNDKLVLSSSIQEGIKEIFNSKDNKINDKNEKDSTKTIDDSKLKKAQEYYNKAIEAQKNGDWTKYGENINELGNILNSIK.

The next 7 helical transmembrane spans lie at 9–29, 49–69, 94–114, 154–174, 202–222, 246–266, and 273–293; these read IPLF…NFII, AIII…WMYY, LFFI…SSSY, VIIS…FILE, LAIV…IKIW, FYKI…LSIV, and VSIC…ASFL.

Belongs to the UPF0182 family.

It is found in the cell membrane. This is UPF0182 protein CLD_0809 from Clostridium botulinum (strain Okra / Type B1).